The sequence spans 484 residues: Cholesterol 22-hydroxylase CYP90B27 (484 aa).

The chain crosses the membrane as a helical span at residues 2–22 (ALELILVLSSLIVILIIFFSF). C429 contributes to the heme binding site.

It belongs to the cytochrome P450 family. Expressed in roots.

It localises to the membrane. It catalyses the reaction cholesterol + reduced [NADPH--hemoprotein reductase] + O2 = (22R)-hydroxycholesterol + oxidized [NADPH--hemoprotein reductase] + H2O + H(+). The protein operates within steroid metabolism; cholesterol metabolism. Its function is as follows. Involved in the biosynthesis of steroidal saponins and alkaloids natural products from cholesterol such as spirostane-type saponins and polyphyllins, compounds with pharmacological activity. Catalyzes the C-22 hydroxylation of cholesterol to form 22R-hydroxycholesterol. This chain is Cholesterol 22-hydroxylase CYP90B27, found in Paris polyphylla (Daiswa polyphylla).